Consider the following 151-residue polypeptide: Cytochrome c-type biogenesis protein CcmE (151 aa).

At 1 to 8 (MNPLRKKR) the chain is on the cytoplasmic side. The helical; Signal-anchor for type II membrane protein transmembrane segment at 9–29 (LLIILAILVGVGIAVGLALSA) threads the bilayer. The Periplasmic portion of the chain corresponds to 30-151 (LKENINLFYT…QSAPTPAKEG (122 aa)). 2 residues coordinate heme: His-124 and Tyr-128. The disordered stretch occupies residues 131 to 151 (PEVTKALKDSGQSAPTPAKEG).

The protein belongs to the CcmE/CycJ family.

The protein resides in the cell inner membrane. Its function is as follows. Heme chaperone required for the biogenesis of c-type cytochromes. Transiently binds heme delivered by CcmC and transfers the heme to apo-cytochromes in a process facilitated by CcmF and CcmH. This chain is Cytochrome c-type biogenesis protein CcmE, found in Pseudomonas fluorescens (strain ATCC BAA-477 / NRRL B-23932 / Pf-5).